The chain runs to 669 residues: Probable ferric reductase transmembrane component (669 aa).

Residues phenylalanine 17–threonine 86 are disordered. N-linked (GlcNAc...) asparagine glycans are attached at residues asparagine 20, asparagine 52, asparagine 64, and asparagine 116. A compositionally biased stretch (low complexity) spans threonine 28–threonine 86. The helical transmembrane segment at glycine 122 to isoleucine 142 threads the bilayer. Asparagine 152 carries an N-linked (GlcNAc...) asparagine glycan. The next 5 helical transmembrane spans lie at isoleucine 198 to valine 218, leucine 234 to glycine 254, valine 281 to glycine 301, isoleucine 313 to phenylalanine 333, and valine 340 to leucine 360. The region spanning threonine 239–isoleucine 373 is the Ferric oxidoreductase domain. Residues alanine 374–alanine 492 enclose the FAD-binding FR-type domain. Histidine 437–threonine 442 lines the FAD pocket. Residues valine 499 to alanine 519 form a helical membrane-spanning segment. Residues asparagine 524 and asparagine 653 are each glycosylated (N-linked (GlcNAc...) asparagine).

The protein belongs to the ferric reductase (FRE) family. The cofactor is FAD.

The protein localises to the membrane. It catalyses the reaction 2 a Fe(II)-siderophore + NAD(+) + H(+) = 2 a Fe(III)-siderophore + NADH. The sequence is that of Probable ferric reductase transmembrane component (CFL1) from Candida albicans (Yeast).